A 470-amino-acid polypeptide reads, in one-letter code: MKSILDGLADTTFRTITTDLLYLGPNEVQYDDSKGDISSKLVYFPQKLPLSSLRGDPLHEKMTIIDDPLLSIPLDQINATDFYNKSIIFKDTDDNVQCGKNFMDMECFMILTPSQQLVIAALSIILGTFTVLENMLVLVVIVQSRSLRCRPSYHFIGSLAVADLLGSVIFVYSFVDFHVFHRKDSPNVFLFKLGGVTASFTASVGSLFLTAIDRYISIHRPMSYKRIVTRTKAVIAFCMMWTIAIVIAVLPLFGWNCIKLRSVCSDIFPLIDETYLMFWIGVTSVLLLFIVYAYMYILWKAHNHAVRMLQRGTQKSIIVHTSEDGKVHITRPDQTRMDIRLAKTLVLILVVLIICWGPLMAIMVYDVFGKINKTIKTVFAFCSVLCLLNSTVNPIIYALRSKDLRNAFCSMFPSCQGTAQPLDNSMESDCQNRHVNNSNAHRAAESCIKSTVKIAKVTMSVSTDTSAEAV.

The Extracellular portion of the chain corresponds to 1–121 (MKSILDGLAD…TPSQQLVIAA (121 aa)). The tract at residues 2 to 23 (KSILDGLADTTFRTITTDLLYL) is required for mitochondrial localization. N-linked (GlcNAc...) asparagine glycosylation is found at Asn78 and Asn84. A helical membrane pass occupies residues 122–142 (LSIILGTFTVLENMLVLVVIV). The Cytoplasmic segment spans residues 143 to 154 (QSRSLRCRPSYH). The helical transmembrane segment at 155-175 (FIGSLAVADLLGSVIFVYSFV) threads the bilayer. Residues 176–187 (DFHVFHRKDSPN) are Extracellular-facing. Residues 188–208 (VFLFKLGGVTASFTASVGSLF) traverse the membrane as a helical segment. Residues 209–232 (LTAIDRYISIHRPMSYKRIVTRTK) are Cytoplasmic-facing. The helical transmembrane segment at 233–253 (AVIAFCMMWTIAIVIAVLPLF) threads the bilayer. The Extracellular portion of the chain corresponds to 254-277 (GWNCIKLRSVCSDIFPLIDETYLM). The chain crosses the membrane as a helical span at residues 278–298 (FWIGVTSVLLLFIVYAYMYIL). The Cytoplasmic segment spans residues 299 to 344 (WKAHNHAVRMLQRGTQKSIIVHTSEDGKVHITRPDQTRMDIRLAKT). The helical transmembrane segment at 345–365 (LVLILVVLIICWGPLMAIMVY) threads the bilayer. At 366–377 (DVFGKINKTIKT) the chain is on the extracellular side. N-linked (GlcNAc...) asparagine glycosylation is present at Asn372. A helical transmembrane segment spans residues 378–398 (VFAFCSVLCLLNSTVNPIIYA). The Cytoplasmic portion of the chain corresponds to 399 to 470 (LRSKDLRNAF…VSTDTSAEAV (72 aa)). Residue Cys415 is the site of S-palmitoyl cysteine attachment.

This sequence belongs to the G-protein coupled receptor 1 family. Palmitoylation at Cys-415 is important for recruitment at both plasma membrane and lipid rafts and association with G protein alpha subunits. In terms of tissue distribution, expressed in neurons, especially in the olfactory bulbs, telencephalic pallium, and hypothalamus and also in the midbrain and hindbrain (in the mesencephalic tegmentum and dorsolateral rhombencephalon). Expressed also in the spinal cord.

It is found in the cell membrane. The protein resides in the mitochondrion outer membrane. The protein localises to the cell projection. It localises to the axon. Its subcellular location is the presynapse. In terms of biological role, G-protein coupled receptor for cannabinoids. Mediates many cannabinoid-induced effects in the central nervous system (CNS), as well as in peripheral tissues. Regulates cellular respiration and energy production in response to cannabinoids. Signaling typically involves reduction in cyclic AMP. The sequence is that of Cannabinoid receptor 1 (cnr1) from Xenopus laevis (African clawed frog).